The chain runs to 499 residues: Sialic acid-binding Ig-like lectin 8 (499 aa).

Residues 1–16 (MLLLLLLLPLLWGTKG) form the signal peptide. At 17-363 (MEGDRQYGDG…RPVSQVTLAA (347 aa)) the chain is on the extracellular side. Residues tyrosine 23, 72-75 (RPYQ), arginine 125, and 134-138 (SYKSQ) each bind a carbohydrate. The 84-residue stretch at 40–123 (GLCVHVPCSF…ARKRDKGSYF (84 aa)) folds into the Ig-like V-type domain. Cystine bridges form between cysteine 42–cysteine 181, cysteine 47–cysteine 107, and cysteine 175–cysteine 224. 2 Ig-like C2-type domains span residues 157–240 (PDIL…STVR) and 246–344 (PPWN…LSLS). Asparagine 172 carries N-linked (GlcNAc...) asparagine glycosylation. 2 N-linked (GlcNAc...) asparagine glycosylation sites follow: asparagine 249 and asparagine 267. Cysteine 283 and cysteine 328 are disulfide-bonded. Residues 364–384 (VGGAGATALAFLSFCIIFIIV) form a helical membrane-spanning segment. The Cytoplasmic portion of the chain corresponds to 385–499 (RSCRKKSARP…HNPSSKEVRG (115 aa)). A disordered region spans residues 410 to 443 (RGSASQGPLTESWKDGNPLKKPPPAVAPSSGEEG). An ITIM motif motif is present at residues 445-450 (LHYATL). 2 disordered regions span residues 451–470 (SFHKVKPQDPQGQEATDSEY) and 478–499 (RETAETQACLRNHNPSSKEVRG). Residues 468–473 (SEYSEI) carry the SLAM-like motif motif.

Belongs to the immunoglobulin superfamily. SIGLEC (sialic acid binding Ig-like lectin) family. In terms of tissue distribution, expressed specifically on blood cells namely basophil, mast cells and eosinophils.

Its subcellular location is the membrane. Putative adhesion molecule that mediates sialic-acid dependent binding to blood cells. Preferentially binds to alpha-2,3-linked sialic acid. Also binds to alpha-2,6-linked sialic acid. The sialic acid recognition site may be masked by cis interactions with sialic acids on the same cell surface. Recognizes simultaneously epitopes having a terminal N-acetylneuraminic acid (sialic acid) and an underlying 6-O-sulfated galactose. Preferentially binds to Gal-6-sulfated sialyl-Lewis X glycan epitopes. The chain is Sialic acid-binding Ig-like lectin 8 (SIGLEC8) from Homo sapiens (Human).